Here is a 210-residue protein sequence, read N- to C-terminus: Transcriptional regulator DauR (210 aa).

The protein belongs to the DauR family.

Its function is as follows. DauR represses the dauBAR operon. The polypeptide is Transcriptional regulator DauR (Pseudomonas aeruginosa (strain ATCC 15692 / DSM 22644 / CIP 104116 / JCM 14847 / LMG 12228 / 1C / PRS 101 / PAO1)).